The sequence spans 277 residues: Orotidine 5'-phosphate decarboxylase (277 aa).

Residues Asp40, 62-64 (KTH), 93-102 (DRKFIDIGNT), Tyr229, and Arg247 each bind substrate. The active-site Proton donor is the Lys95.

The protein belongs to the OMP decarboxylase family.

It carries out the reaction orotidine 5'-phosphate + H(+) = UMP + CO2. The protein operates within pyrimidine metabolism; UMP biosynthesis via de novo pathway; UMP from orotate: step 2/2. This chain is Orotidine 5'-phosphate decarboxylase (pyrG), found in Aspergillus awamori (Black koji mold).